The sequence spans 286 residues: Thymidylate synthase (286 aa).

Residue 140–141 coordinates dUMP; it reads RR. Cysteine 161 functions as the Nucleophile in the catalytic mechanism. Residues 185 to 188, asparagine 196, and 226 to 228 each bind dUMP; these read RSND and HIY. Aspartate 188 is a (6R)-5,10-methylene-5,6,7,8-tetrahydrofolate binding site. A (6R)-5,10-methylene-5,6,7,8-tetrahydrofolate-binding site is contributed by alanine 285.

The protein belongs to the thymidylate synthase family. Bacterial-type ThyA subfamily. Homodimer.

The protein resides in the cytoplasm. The catalysed reaction is dUMP + (6R)-5,10-methylene-5,6,7,8-tetrahydrofolate = 7,8-dihydrofolate + dTMP. It functions in the pathway pyrimidine metabolism; dTTP biosynthesis. Its function is as follows. Catalyzes the reductive methylation of 2'-deoxyuridine-5'-monophosphate (dUMP) to 2'-deoxythymidine-5'-monophosphate (dTMP) while utilizing 5,10-methylenetetrahydrofolate (mTHF) as the methyl donor and reductant in the reaction, yielding dihydrofolate (DHF) as a by-product. This enzymatic reaction provides an intracellular de novo source of dTMP, an essential precursor for DNA biosynthesis. The chain is Thymidylate synthase from Streptococcus thermophilus (strain ATCC BAA-491 / LMD-9).